The primary structure comprises 60 residues: Large ribosomal subunit protein bL33 (60 aa).

This sequence belongs to the bacterial ribosomal protein bL33 family.

This chain is Large ribosomal subunit protein bL33, found in Chlorobium phaeobacteroides (strain DSM 266 / SMG 266 / 2430).